Consider the following 332-residue polypeptide: DNA-directed RNA polymerase subunit alpha (332 aa).

Positions 1–231 (MQTNLLKPKT…EQLAVFAQLD (231 aa)) are alpha N-terminal domain (alpha-NTD). The tract at residues 252-332 (FDPILLRPVD…NWPPAGLEKR (81 aa)) is alpha C-terminal domain (alpha-CTD).

This sequence belongs to the RNA polymerase alpha chain family. As to quaternary structure, homodimer. The RNAP catalytic core consists of 2 alpha, 1 beta, 1 beta' and 1 omega subunit. When a sigma factor is associated with the core the holoenzyme is formed, which can initiate transcription.

The enzyme catalyses RNA(n) + a ribonucleoside 5'-triphosphate = RNA(n+1) + diphosphate. DNA-dependent RNA polymerase catalyzes the transcription of DNA into RNA using the four ribonucleoside triphosphates as substrates. The sequence is that of DNA-directed RNA polymerase subunit alpha from Delftia acidovorans (strain DSM 14801 / SPH-1).